The primary structure comprises 393 residues: MDLLSPLSAIVLTYREVDTDTLGKIGEEMRKCLEQMGRGTPIYVLHTCGRVEAYLYGASPEEVQTVAETYRKYVNSVRIIAGVEAARHLFRVAAGLDSMLIGETDVLGQLEEAFDRQVRAGYTRGLLKTIVERAVRVGKRVRTETAISRGPRGLGSLSIIYVSRLLDMRQAKVAVLGAGAVGAGLAMELAARGVKKLYILNRTLEKAKEVAAKTGGEARPLTKEEVERCLRECDVVFSSVHSMEYIIDKIPEGASVKVVVDLGVPQTVASGLPVKVVRIEDLREIAEQYNAERASEIAKAEAIVEEELAILPKLLARRYIEETVSTFIETAMLAAEEEGARAGCNTATLAARTTVKRILLPLVERLKKMAEDGQIEEAVKLAQMLSQTIGRKI.

Residues T47–R50, S98, E103–D105, and Q109 each bind substrate. Catalysis depends on C48, which acts as the Nucleophile. G177–G182 contributes to the NADP(+) binding site.

The protein belongs to the glutamyl-tRNA reductase family. As to quaternary structure, homodimer.

It catalyses the reaction (S)-4-amino-5-oxopentanoate + tRNA(Glu) + NADP(+) = L-glutamyl-tRNA(Glu) + NADPH + H(+). It functions in the pathway porphyrin-containing compound metabolism; protoporphyrin-IX biosynthesis; 5-aminolevulinate from L-glutamyl-tRNA(Glu): step 1/2. In terms of biological role, catalyzes the NADPH-dependent reduction of glutamyl-tRNA(Glu) to glutamate 1-semialdehyde (GSA). In Pyrobaculum islandicum (strain DSM 4184 / JCM 9189 / GEO3), this protein is Glutamyl-tRNA reductase.